Here is a 273-residue protein sequence, read N- to C-terminus: 4-hydroxy-tetrahydrodipicolinate reductase (273 aa).

NAD(+) contacts are provided by residues 12–17 (GAGGRM) and E38. R39 is an NADP(+) binding site. Residues 102 to 104 (GTT) and 126 to 129 (AANF) contribute to the NAD(+) site. The active-site Proton donor/acceptor is the H159. H160 serves as a coordination point for (S)-2,3,4,5-tetrahydrodipicolinate. K163 (proton donor) is an active-site residue. 169–170 (GT) is a binding site for (S)-2,3,4,5-tetrahydrodipicolinate.

It belongs to the DapB family. Homotetramer.

It localises to the cytoplasm. The catalysed reaction is (S)-2,3,4,5-tetrahydrodipicolinate + NAD(+) + H2O = (2S,4S)-4-hydroxy-2,3,4,5-tetrahydrodipicolinate + NADH + H(+). It carries out the reaction (S)-2,3,4,5-tetrahydrodipicolinate + NADP(+) + H2O = (2S,4S)-4-hydroxy-2,3,4,5-tetrahydrodipicolinate + NADPH + H(+). The protein operates within amino-acid biosynthesis; L-lysine biosynthesis via DAP pathway; (S)-tetrahydrodipicolinate from L-aspartate: step 4/4. Catalyzes the conversion of 4-hydroxy-tetrahydrodipicolinate (HTPA) to tetrahydrodipicolinate. The sequence is that of 4-hydroxy-tetrahydrodipicolinate reductase from Escherichia fergusonii (strain ATCC 35469 / DSM 13698 / CCUG 18766 / IAM 14443 / JCM 21226 / LMG 7866 / NBRC 102419 / NCTC 12128 / CDC 0568-73).